A 114-amino-acid polypeptide reads, in one-letter code: Putative pterin-4-alpha-carbinolamine dehydratase (114 aa).

The protein belongs to the pterin-4-alpha-carbinolamine dehydratase family.

It carries out the reaction (4aS,6R)-4a-hydroxy-L-erythro-5,6,7,8-tetrahydrobiopterin = (6R)-L-erythro-6,7-dihydrobiopterin + H2O. This Pseudoalteromonas translucida (strain TAC 125) protein is Putative pterin-4-alpha-carbinolamine dehydratase.